The chain runs to 315 residues: Lipoyl synthase (315 aa).

The [4Fe-4S] cluster site is built by Cys-62, Cys-67, Cys-73, Cys-88, Cys-92, Cys-95, and Ser-302. The Radical SAM core domain maps to 74–291 (FGKGTATFMI…ETEALRMGFR (218 aa)).

It belongs to the radical SAM superfamily. Lipoyl synthase family. The cofactor is [4Fe-4S] cluster.

It is found in the cytoplasm. The enzyme catalyses [[Fe-S] cluster scaffold protein carrying a second [4Fe-4S](2+) cluster] + N(6)-octanoyl-L-lysyl-[protein] + 2 oxidized [2Fe-2S]-[ferredoxin] + 2 S-adenosyl-L-methionine + 4 H(+) = [[Fe-S] cluster scaffold protein] + N(6)-[(R)-dihydrolipoyl]-L-lysyl-[protein] + 4 Fe(3+) + 2 hydrogen sulfide + 2 5'-deoxyadenosine + 2 L-methionine + 2 reduced [2Fe-2S]-[ferredoxin]. It participates in protein modification; protein lipoylation via endogenous pathway; protein N(6)-(lipoyl)lysine from octanoyl-[acyl-carrier-protein]: step 2/2. Functionally, catalyzes the radical-mediated insertion of two sulfur atoms into the C-6 and C-8 positions of the octanoyl moiety bound to the lipoyl domains of lipoate-dependent enzymes, thereby converting the octanoylated domains into lipoylated derivatives. The sequence is that of Lipoyl synthase from Azoarcus sp. (strain BH72).